Here is a 150-residue protein sequence, read N- to C-terminus: 3-dehydroquinate dehydratase (150 aa).

Tyr-26 (proton acceptor) is an active-site residue. The substrate site is built by Asn-77, His-83, and Asp-90. Residue His-103 is the Proton donor of the active site. Substrate is bound by residues 104–105 (LS) and Arg-114.

It belongs to the type-II 3-dehydroquinase family. As to quaternary structure, homododecamer.

The enzyme catalyses 3-dehydroquinate = 3-dehydroshikimate + H2O. It participates in metabolic intermediate biosynthesis; chorismate biosynthesis; chorismate from D-erythrose 4-phosphate and phosphoenolpyruvate: step 3/7. In terms of biological role, catalyzes a trans-dehydration via an enolate intermediate. The polypeptide is 3-dehydroquinate dehydratase (Klebsiella pneumoniae (strain 342)).